A 369-amino-acid chain; its full sequence is uncharacterized protein (369 aa).

The first 19 residues, 1 to 19 (MKKLIAVAVLSACGSLAHA), serve as a signal peptide directing secretion.

This is an uncharacterized protein from Haemophilus influenzae (strain ATCC 51907 / DSM 11121 / KW20 / Rd).